Here is a 585-residue protein sequence, read N- to C-terminus: Arginine--tRNA ligase (585 aa).

The 'HIGH' region motif lies at 131–141; that stretch reads ANPTGPMHVGH.

It belongs to the class-I aminoacyl-tRNA synthetase family. In terms of assembly, monomer.

It localises to the cytoplasm. The catalysed reaction is tRNA(Arg) + L-arginine + ATP = L-arginyl-tRNA(Arg) + AMP + diphosphate. The polypeptide is Arginine--tRNA ligase (Brucella suis (strain ATCC 23445 / NCTC 10510)).